Consider the following 194-residue polypeptide: MSTRNPQRKRRGGTVNSRQTQKRTRETTSTPEVSLETEPIELVETVGDEIVDLTCESLEPVVVDLTHNDSVVIVEERRRPRRNGRRLRQDHADSCVVSSDDEELSRDKDVYVTTHTPRSTKDDGATGPRPSGTVSCPICMDGYSEIVQNGRLIVSTECGHVFCSQCLRDSLKNANTCPTCRKKINHKRYHPIYI.

Residues Met-1 to Gly-12 show a composition bias toward basic residues. Residues Met-1 to Thr-20 are required for ubiquitination activity. The segment at Met-1–Pro-39 is disordered. Residues Pro-6–Leu-65 form a mediates interaction with TRPS1 region. Residues Ile-40–Val-43 carry the SUMO interaction motif 1; mediates the binding to polysumoylated substrates motif. The short motif at Ile-50–Leu-53 is the SUMO interaction motif 2; mediates the binding to polysumoylated substrates element. The short motif at Val-61–Val-63 is the SUMO interaction motif 3; mediates the binding to polysumoylated substrates element. Residues Val-71–Val-74 carry the SUMO interaction motif 4; mediates the binding to polysumoylated substrates motif. Phosphoserine occurs at positions 98 and 99. The interval Val-110–Pro-130 is disordered. Zn(2+)-binding residues include Cys-136, Cys-139, Cys-158, His-160, Cys-163, Cys-166, Cys-177, and Cys-180. An RING-type zinc finger spans residues Cys-136 to Arg-181.

As to quaternary structure, homodimer (via RING-type zinc finger domain). Interacts with GSC2. Interacts with AR/the androgen receptor and TBP. Interacts with TCF20. Interacts with PATZ1. Interacts with TRPS1; negatively regulates TRPS1 transcriptional repressor activity. Interacts with PML (isoform PML-1, isoform PML-2, isoform PML-3, isoform PML-4, isoform PML-5 and isoform PML-6). Interacts with PRDM1/Blimp-1. Post-translationally, sumoylated; conjugated by one or two SUMO1 moieties. Autoubiquitinated. In the embryo, expressed primarily in the developing nervous system with strong expression in the dorsal root ganglia and gonads. Ubiquitously expressed in the adult.

It localises to the cytoplasm. Its subcellular location is the nucleus. The protein resides in the PML body. It carries out the reaction S-ubiquitinyl-[E2 ubiquitin-conjugating enzyme]-L-cysteine + [acceptor protein]-L-lysine = [E2 ubiquitin-conjugating enzyme]-L-cysteine + N(6)-ubiquitinyl-[acceptor protein]-L-lysine.. The protein operates within protein modification; protein ubiquitination. E3 ubiquitin-protein ligase which binds polysumoylated chains covalently attached to proteins and mediates 'Lys-6'-, 'Lys-11'-, 'Lys-48'- and 'Lys-63'-linked polyubiquitination of those substrates and their subsequent targeting to the proteasome for degradation. Regulates the degradation of several proteins including PML and the transcriptional activator PEA3. Involved in chromosome alignment and spindle assembly, it regulates the kinetochore CENPH-CENPI-CENPK complex by targeting polysumoylated CENPI to proteasomal degradation. Regulates the cellular responses to hypoxia and heat shock through degradation of respectively EPAS1 and PARP1. Alternatively, it may also bind DNA/nucleosomes and have a more direct role in the regulation of transcription for instance enhancing basal transcription and steroid receptor-mediated transcriptional activation. Catalyzes ubiquitination of sumoylated PARP1 in response to PARP1 trapping to chromatin, leading to PARP1 removal from chromatin by VCP/p97. This Mus musculus (Mouse) protein is E3 ubiquitin-protein ligase RNF4.